Reading from the N-terminus, the 1281-residue chain is Dynactin subunit 1 (1281 aa).

Positions Met-1–Pro-26 are disordered. Over residues Ser-10–Ala-22 the composition is skewed to polar residues. Residues Gly-48–Arg-90 form the CAP-Gly domain. Positions Gly-100–Arg-221 are disordered. Positions Asp-102 to Ser-114 are enriched in polar residues. A phosphothreonine mark is found at Thr-108, Thr-145, Thr-146, and Thr-147. Basic residues predominate over residues Ser-129–Pro-152. The segment covering Ala-161–Gly-205 has biased composition (low complexity). Ser-179 is subject to Phosphoserine; by PLK1. Ser-212 is subject to Phosphoserine; by CDK1. Coiled coils occupy residues Ser-214–Gln-547, Leu-943–Arg-1049, and Ser-1185–Val-1214. Positions Glu-911–Ser-1281 are interaction with HPS6.

This sequence belongs to the dynactin 150 kDa subunit family. As to quaternary structure, monomer and homodimer. Subunit of dynactin, a multiprotein complex part of a tripartite complex with dynein and a adapter, such as BICDL1, BICD2 or HOOK3. The dynactin complex is built around ACTR1A/ACTB filament and consists of an actin-related filament composed of a shoulder domain, a pointed end and a barbed end. Its length is defined by its flexible shoulder domain. The soulder is composed of 2 DCTN1 subunits, 4 DCTN2 and 2 DCTN3. DCTN1/p150(glued) binds directly to microtubules and to cytoplasmic dynein. The 4 DCNT2 (via N-terminus) bind the ACTR1A filament and act as molecular rulers to determine the length. The pointed end is important for binding dynein-dynactin cargo adapters. Consists of 4 subunits: ACTR10, DCNT4, DCTN5 and DCTN6. The barbed end is composed of a CAPZA1:CAPZB heterodimers, which binds ACTR1A/ACTB filament and dynactin and stabilizes dynactin. Interacts with the C-terminus of MAPRE1, MAPRE2 and MAPRE3. Interacts with FBXL5. Interacts with ECPAS. Interacts with CLIP1. Interacts with CLN3 and DYNAP. Interacts with MISP; this interaction regulates its distribution at the cell cortex. Interacts with CEP131. Interacts with CEP126. Interacts with dynein intermediate chain and dynein heavy chain. Interacts with PLK1 (via POLO-box domain). Interacts with TBCB and PARD6A. Binds preferentially to tyrosinated microtubules than to detyrosinated microtubules. Interacts with KIF3A. Interacts with HPS6. Interacts with SNX6. Interacts with BICD2. Interacts with DST (isoform 1). Identified in a complex with MREG and RILP. Interacts with BCCIP. Interacts with DCDC1. Interacts with AKNA. Interacts with DYNC1I2. Interacts with RUFY3 and RUFY4. Post-translationally, ubiquitinated by a SCF complex containing FBXL5, leading to its degradation by the proteasome. Phosphorylation by SLK at Thr-145, Thr-146 and Thr-147 targets DCTN1 to the centrosome. It is uncertain if SLK phosphorylates all three threonines or one or two of them. PLK1-mediated phosphorylation at Ser-179 is essential for its localization in the nuclear envelope and promotes its dissociation from microtubules during early mitosis and positively regulates nuclear envelope breakdown during prophase.

Its subcellular location is the cytoplasm. The protein localises to the cytoskeleton. The protein resides in the microtubule organizing center. It is found in the centrosome. It localises to the centriole. Its subcellular location is the spindle. The protein localises to the nucleus envelope. The protein resides in the cell cortex. Functionally, part of the dynactin complex that activates the molecular motor dynein for ultra-processive transport along microtubules. Plays a key role in dynein-mediated retrograde transport of vesicles and organelles along microtubules by recruiting and tethering dynein to microtubules. Binds to both dynein and microtubules providing a link between specific cargos, microtubules and dynein. Essential for targeting dynein to microtubule plus ends, recruiting dynein to membranous cargos and enhancing dynein processivity (the ability to move along a microtubule for a long distance without falling off the track). Can also act as a brake to slow the dynein motor during motility along the microtubule. Can regulate microtubule stability by promoting microtubule formation, nucleation and polymerization and by inhibiting microtubule catastrophe in neurons. Inhibits microtubule catastrophe by binding both to microtubules and to tubulin, leading to enhanced microtubule stability along the axon. Plays a role in metaphase spindle orientation. Plays a role in centriole cohesion and subdistal appendage organization and function. Its recruitment to the centriole in a KIF3A-dependent manner is essential for the maintenance of centriole cohesion and the formation of subdistal appendage. Also required for microtubule anchoring at the mother centriole. Plays a role in primary cilia formation. This chain is Dynactin subunit 1 (Dctn1), found in Mus musculus (Mouse).